Here is a 418-residue protein sequence, read N- to C-terminus: AP-3 complex subunit mu-1 (418 aa).

Residues 176–417 (NNEAYFDVIE…ITKAGKFQVR (242 aa)) form the MHD domain.

This sequence belongs to the adaptor complexes medium subunit family. The AP-3 complex associates with the BLOC-1 complex.

It localises to the golgi apparatus. Its subcellular location is the cytoplasmic vesicle membrane. In terms of biological role, part of the AP-3 complex, an adaptor-related complex which is not clathrin-associated. The complex is associated with the Golgi region as well as more peripheral structures. It facilitates the budding of vesicles from the Golgi membrane and may be directly involved in trafficking to lysosomes. In concert with the BLOC-1 complex, AP-3 is required to target cargos into vesicles assembled at cell bodies for delivery into neurites and nerve terminals. The sequence is that of AP-3 complex subunit mu-1 (AP3M1) from Gallus gallus (Chicken).